The chain runs to 494 residues: Nicotianamine aminotransferase 1 (494 aa).

Composition is skewed to low complexity over residues 24–38 (SGTS…TSSS) and 48–62 (STAM…AASS). The interval 24 to 76 (SGTSYPTRTTTTSSSAPEFTNKKQSTAMAPTTAAAAASSNGGGESDGSSKEWR) is disordered. Position 322 is an N6-(pyridoxal phosphate)lysine (Lys322).

The protein belongs to the class-I pyridoxal-phosphate-dependent aminotransferase family. It depends on pyridoxal 5'-phosphate as a cofactor. Expressed in companion and pericycle cells adjacent to the protoxylem of roots. Expressed in companion cells of shoots.

It carries out the reaction nicotianamine + 2-oxoglutarate = 3''-deamino-3''-oxonicotianamine + L-glutamate. In terms of biological role, involved in biosynthesis of mugineic acid family phytosiderophores, which are ferric iron chelators produced in graminaceous plants in response to iron deficiency. The chain is Nicotianamine aminotransferase 1 from Oryza sativa subsp. japonica (Rice).